Consider the following 175-residue polypeptide: Protein ppBat (175 aa).

Zn(2+) contacts are provided by C74 and C111. Riboflavin-binding residues include N161 and W164.

In terms of assembly, homodimer.

Its function is as follows. Binds flavin derivatives, such as lumichrome, riboflavin, FMN, and FAD. May act as a flavin storage protein. Appears to lack proteolytic or chaperone activities. In Bacteroides thetaiotaomicron (strain ATCC 29148 / DSM 2079 / JCM 5827 / CCUG 10774 / NCTC 10582 / VPI-5482 / E50), this protein is Protein ppBat.